The chain runs to 458 residues: Bifunctional protein GlmU (458 aa).

Residues 1–230 (MLQVDVVILA…DWEVSGVNDK (230 aa)) are pyrophosphorylase. Residues 9–12 (LAAG), Lys23, Gln75, and 80–81 (GT) contribute to the UDP-N-acetyl-alpha-D-glucosamine site. Mg(2+) is bound at residue Asp104. Gly139, Glu155, Asn170, and Asn228 together coordinate UDP-N-acetyl-alpha-D-glucosamine. Asn228 contacts Mg(2+). The interval 231–251 (IQLSILERAHQQDTANRLMEQ) is linker. The segment at 252-458 (GVMFADPARF…NWKRPRKDRN (207 aa)) is N-acetyltransferase. Arg334 and Lys352 together coordinate UDP-N-acetyl-alpha-D-glucosamine. The Proton acceptor role is filled by His364. UDP-N-acetyl-alpha-D-glucosamine is bound by residues Tyr367 and Asn378. Residues Ala381, 387-388 (NY), Ser406, Ala424, and Arg441 contribute to the acetyl-CoA site.

It in the N-terminal section; belongs to the N-acetylglucosamine-1-phosphate uridyltransferase family. The protein in the C-terminal section; belongs to the transferase hexapeptide repeat family. In terms of assembly, homotrimer. Mg(2+) is required as a cofactor.

The protein localises to the cytoplasm. It carries out the reaction alpha-D-glucosamine 1-phosphate + acetyl-CoA = N-acetyl-alpha-D-glucosamine 1-phosphate + CoA + H(+). The enzyme catalyses N-acetyl-alpha-D-glucosamine 1-phosphate + UTP + H(+) = UDP-N-acetyl-alpha-D-glucosamine + diphosphate. Its pathway is nucleotide-sugar biosynthesis; UDP-N-acetyl-alpha-D-glucosamine biosynthesis; N-acetyl-alpha-D-glucosamine 1-phosphate from alpha-D-glucosamine 6-phosphate (route II): step 2/2. The protein operates within nucleotide-sugar biosynthesis; UDP-N-acetyl-alpha-D-glucosamine biosynthesis; UDP-N-acetyl-alpha-D-glucosamine from N-acetyl-alpha-D-glucosamine 1-phosphate: step 1/1. It functions in the pathway bacterial outer membrane biogenesis; LPS lipid A biosynthesis. Functionally, catalyzes the last two sequential reactions in the de novo biosynthetic pathway for UDP-N-acetylglucosamine (UDP-GlcNAc). The C-terminal domain catalyzes the transfer of acetyl group from acetyl coenzyme A to glucosamine-1-phosphate (GlcN-1-P) to produce N-acetylglucosamine-1-phosphate (GlcNAc-1-P), which is converted into UDP-GlcNAc by the transfer of uridine 5-monophosphate (from uridine 5-triphosphate), a reaction catalyzed by the N-terminal domain. The chain is Bifunctional protein GlmU from Nitrosomonas europaea (strain ATCC 19718 / CIP 103999 / KCTC 2705 / NBRC 14298).